An 838-amino-acid polypeptide reads, in one-letter code: Tuftelin-interacting protein 11 (838 aa).

Basic and acidic residues predominate over residues 1 to 13; sequence MSLSHLYRDGEGH. A required for interaction with DHX15 region spans residues 1 to 51; sequence MSLSHLYRDGEGHLDDDDDDERENFEITDWDLQNEFNPNRQRHWQTKEEAT. Disordered stretches follow at residues 1–74 and 86–137; these read MSLS…RARD and LKKG…SGGT. At S2 the chain carries Phosphoserine. Positions 14 to 29 are enriched in acidic residues; that stretch reads LDDDDDDERENFEITD. Residues 45 to 65 are compositionally biased toward basic and acidic residues; that stretch reads QTKEEATYGVWAERDSDEERP. S60, S96, and S99 each carry phosphoserine. The segment covering 92-101 has biased composition (acidic residues); the sequence is EEADSEDSDA. The segment covering 102–117 has biased composition (basic and acidic residues); it reads EEKPVKQEDFPKDLGP. S145 is subject to Phosphoserine. The region spanning 150 to 196 is the G-patch domain; that stretch reads TKGIGQKLLQKMGYVPGRGLGKNAQGIINPIEAKQRKGKGAVGAYGS. A disordered region spans residues 193-237; sequence AYGSERTTQSLQDFPVADSEEEAEEEFQKELSQWRKDPSGSKKKP. S211 carries the phosphoserine modification. Over residues 218 to 232 the composition is skewed to basic and acidic residues; that stretch reads EFQKELSQWRKDPSG. A Nuclear localization signal motif is present at residues 701-706; the sequence is VKDKFN. Residues 711 to 735 form a required for nuclear speckle localization region; it reads IMNRAVSSNVGAYMQPGARENIAYL.

It belongs to the TFP11/STIP family. Identified in the spliceosome C complex. Found in the Intron Large (IL) complex, a post-mRNA release spliceosomal complex containing the excised intron, U2, U5 and U6 snRNPs, and splicing factors. Interacts with TUFT1. Interacts with DHX15; indicative for a recruitment of DHX15 to the IL complex. Interacts with GCFC2. As to expression, widely expressed. In tooth it is expressed in ameloblasts and odontoblasts.

The protein localises to the cytoplasm. It localises to the nucleus. In terms of biological role, involved in pre-mRNA splicing, specifically in spliceosome disassembly during late-stage splicing events. Intron turnover seems to proceed through reactions in two lariat-intron associated complexes termed Intron Large (IL) and Intron Small (IS). In cooperation with DHX15 seems to mediate the transition of the U2, U5 and U6 snRNP-containing IL complex to the snRNP-free IS complex leading to efficient debranching and turnover of excised introns. May play a role in the differentiation of ameloblasts and odontoblasts or in the forming of the enamel extracellular matrix. The chain is Tuftelin-interacting protein 11 (Tfip11) from Mus musculus (Mouse).